The sequence spans 225 residues: 2-C-methyl-D-erythritol 4-phosphate cytidylyltransferase (225 aa).

The protein belongs to the IspD/TarI cytidylyltransferase family. IspD subfamily.

The enzyme catalyses 2-C-methyl-D-erythritol 4-phosphate + CTP + H(+) = 4-CDP-2-C-methyl-D-erythritol + diphosphate. It functions in the pathway isoprenoid biosynthesis; isopentenyl diphosphate biosynthesis via DXP pathway; isopentenyl diphosphate from 1-deoxy-D-xylulose 5-phosphate: step 2/6. In terms of biological role, catalyzes the formation of 4-diphosphocytidyl-2-C-methyl-D-erythritol from CTP and 2-C-methyl-D-erythritol 4-phosphate (MEP). This is 2-C-methyl-D-erythritol 4-phosphate cytidylyltransferase from Prochlorococcus marinus (strain NATL2A).